The chain runs to 445 residues: D-serine transporter DsdX (445 aa).

The next 12 helical transmembrane spans lie at 5 to 25, 29 to 49, 57 to 77, 106 to 126, 140 to 160, 178 to 198, 224 to 244, 265 to 285, 302 to 322, 343 to 363, 385 to 405, and 425 to 445; these read IWVV…IVKF, PFLA…MGPL, SGIG…TILG, VLVG…VLLI, LLKL…VVPP, VIVY…PLFL, TLPS…LMLV, IGNP…VLGI, FGSI…NAIL, ILLA…ATVA, IIAI…DSLF, and TATF…SFII.

The protein belongs to the GntP permease family.

It localises to the cell inner membrane. Its activity is regulated as follows. Uptake of D-serine is inhibited by carbonyl cyanide m-chlorophenylhydrazone (CCCP), and at high concentrations of D-threonine, stimulated by D-cycloserine and not affected by D-alanine or glycine. In terms of biological role, protein that allows transport of D-serine across the inner membrane, does not transport D-alanine nor probably glycine. Is probably a H(+) symporter, as CCCP inhibits transport. Transports D-serine more efficiently than CycA. The polypeptide is D-serine transporter DsdX (dsdX) (Escherichia coli O6:H1 (strain CFT073 / ATCC 700928 / UPEC)).